We begin with the raw amino-acid sequence, 451 residues long: Adenylyltransferase and sulfurtransferase MOCS3 (451 aa).

The interval glycine 42 to leucine 62 is disordered. Residues glutamate 43 to serine 52 show a composition bias toward acidic residues. Threonine 60 is subject to Phosphothreonine. ATP-binding positions include glycine 99, aspartate 120, serine 127–arginine 131, lysine 144, and aspartate 188–asparagine 189. Residues cysteine 229 and cysteine 232 each contribute to the Zn(2+) site. Catalysis depends on cysteine 246, which acts as the Glycyl thioester intermediate; for adenylyltransferase activity. Zn(2+) is bound by residues cysteine 304 and cysteine 307. In terms of domain architecture, Rhodanese spans glutamine 353–proline 449. The active-site Cysteine persulfide intermediate; for sulfurtransferase activity is the cysteine 408.

In the N-terminal section; belongs to the HesA/MoeB/ThiF family. UBA4 subfamily. Zn(2+) is required as a cofactor.

It localises to the cytoplasm. The protein resides in the cytosol. It catalyses the reaction [molybdopterin-synthase sulfur-carrier protein]-C-terminal Gly-Gly + ATP + H(+) = [molybdopterin-synthase sulfur-carrier protein]-C-terminal Gly-Gly-AMP + diphosphate. The catalysed reaction is [molybdopterin-synthase sulfur-carrier protein]-C-terminal Gly-Gly-AMP + S-sulfanyl-L-cysteinyl-[cysteine desulfurase] + AH2 = [molybdopterin-synthase sulfur-carrier protein]-C-terminal-Gly-aminoethanethioate + L-cysteinyl-[cysteine desulfurase] + A + AMP + 2 H(+). It functions in the pathway tRNA modification; 5-methoxycarbonylmethyl-2-thiouridine-tRNA biosynthesis. It participates in cofactor biosynthesis; molybdopterin biosynthesis. In terms of biological role, plays a central role in 2-thiolation of mcm(5)S(2)U at tRNA wobble positions of cytosolic tRNA(Lys), tRNA(Glu) and tRNA(Gln). Also essential during biosynthesis of the molybdenum cofactor. Acts by mediating the C-terminal thiocarboxylation of sulfur carriers URM1 and MOCS2A. Its N-terminus first activates URM1 and MOCS2A as acyl-adenylates (-COAMP), then the persulfide sulfur on the catalytic cysteine is transferred to URM1 and MOCS2A to form thiocarboxylation (-COSH) of their C-terminus. The reaction probably involves hydrogen sulfide that is generated from the persulfide intermediate and that acts as a nucleophile towards URM1 and MOCS2A. Subsequently, a transient disulfide bond is formed. Does not use thiosulfate as sulfur donor; NFS1 probably acting as a sulfur donor for thiocarboxylation reactions. In Drosophila persimilis (Fruit fly), this protein is Adenylyltransferase and sulfurtransferase MOCS3.